Here is a 766-residue protein sequence, read N- to C-terminus: Alpha-onocerin synthase LCD (766 aa).

PFTB repeat units lie at residues 101 to 143 (LCRA…GALD), 151 to 192 (QREI…RLMG), 456 to 507 (QESY…STTD), 517 to 558 (IHEC…PGYK), 594 to 634 (IQEG…LASG), 643 to 684 (IQRA…HVVH), and 705 to 752 (LHRA…WALG). The Proton donor role is filled by aspartate 488.

Belongs to the terpene cyclase/mutase family.

The catalysed reaction is pre-alpha-onocerin = alpha-onocerin. It participates in secondary metabolite biosynthesis; terpenoid biosynthesis. Functionally, oxidosqualene cyclase involved in the biosynthesis of alpha-onocerin, a triterpenoid characterized by a symmetrical structure due to cyclizations at both termini of dioxidosqualene that inhibits acetylcholinesterase. Catalyzes the second half of the cyclization, exclusively from pre-alpha-onocerin. The polypeptide is Alpha-onocerin synthase LCD (Lycopodium clavatum (Stag's-horn clubmoss)).